Consider the following 457-residue polypeptide: UDP-N-acetylmuramate--L-alanine ligase (457 aa).

109–115 (GTDGKTT) serves as a coordination point for ATP.

It belongs to the MurCDEF family.

The protein resides in the cytoplasm. The enzyme catalyses UDP-N-acetyl-alpha-D-muramate + L-alanine + ATP = UDP-N-acetyl-alpha-D-muramoyl-L-alanine + ADP + phosphate + H(+). It participates in cell wall biogenesis; peptidoglycan biosynthesis. In terms of biological role, cell wall formation. The sequence is that of UDP-N-acetylmuramate--L-alanine ligase from Thermotoga sp. (strain RQ2).